A 241-amino-acid polypeptide reads, in one-letter code: Caffeoyl-CoA O-methyltransferase (241 aa).

A substrate-binding site is contributed by lysine 14. S-adenosyl-L-methionine-binding positions include threonine 58, glutamate 80, 82-83, serine 88, aspartate 106, and alanine 135; that span reads GV. Substrate is bound at residue aspartate 158. An a divalent metal cation-binding site is contributed by aspartate 158. Residue aspartate 160 participates in S-adenosyl-L-methionine binding. Positions 184 and 185 each coordinate a divalent metal cation.

This sequence belongs to the class I-like SAM-binding methyltransferase superfamily. Cation-dependent O-methyltransferase family. CCoAMT subfamily. It depends on a divalent metal cation as a cofactor.

It carries out the reaction (E)-caffeoyl-CoA + S-adenosyl-L-methionine = (E)-feruloyl-CoA + S-adenosyl-L-homocysteine + H(+). It functions in the pathway aromatic compound metabolism; phenylpropanoid biosynthesis. In terms of biological role, methylates caffeoyl-CoA to feruloyl-CoA and 5-hydroxyferuloyl-CoA to sinapoyl-CoA. Plays a role in the synthesis of feruloylated polysaccharides. Involved in the reinforcement of the plant cell wall. Also involved in the responding to wounding or pathogen challenge by the increased formation of cell wall-bound ferulic acid polymers. The chain is Caffeoyl-CoA O-methyltransferase from Stellaria longipes (Longstalk starwort).